A 255-amino-acid polypeptide reads, in one-letter code: MATIGALVLRFFFIAVLMSSQKSWAIKEEHTIIQAEFYLLPDKRGEFMFDFDGDEIFHVDIEKSETIWRLEEFAKFASFEAQGALANIAVDKANLDVMKERSNNTPDANVAPEVTVLSRSPVNLGEPNILICFIDKFSPPVVNVTWLRNGRPVTEGVSETVFLPRDDHLFRKFHYLTFLPSTDDFYDCEVDHWGLEEPLRKTWEFEEKTLLPETKENVMCALGLFVGLVGIVVGIILIMKGIKKRNVVERRQGAL.

An N-terminal signal peptide occupies residues 1 to 25 (MATIGALVLRFFFIAVLMSSQKSWA). Positions 26 to 109 (IKEEHTIIQA…ERSNNTPDAN (84 aa)) are alpha-1. Residues 26 to 216 (IKEEHTIIQA…EKTLLPETKE (191 aa)) are Extracellular-facing. Positions 110 to 203 (VAPEVTVLSR…GLEEPLRKTW (94 aa)) are alpha-2. Residues 112-204 (PEVTVLSRSP…LEEPLRKTWE (93 aa)) form the Ig-like C1-type domain. Residues cysteine 132 and cysteine 188 are joined by a disulfide bond. Residue asparagine 143 is glycosylated (N-linked (GlcNAc...) asparagine). The connecting peptide stretch occupies residues 204–216 (EFEEKTLLPETKE). The chain crosses the membrane as a helical span at residues 217 to 242 (NVMCALGLFVGLVGIVVGIILIMKGI). Residues 243–255 (KKRNVVERRQGAL) are Cytoplasmic-facing.

This sequence belongs to the MHC class II family.

It localises to the membrane. This is H-2 class II histocompatibility antigen, E-D alpha chain (H2-Ea) from Mus musculus (Mouse).